Consider the following 386-residue polypeptide: Histidinol-phosphate aminotransferase (386 aa).

Residue Lys-240 is modified to N6-(pyridoxal phosphate)lysine.

The protein belongs to the class-II pyridoxal-phosphate-dependent aminotransferase family. Histidinol-phosphate aminotransferase subfamily. Homodimer. The cofactor is pyridoxal 5'-phosphate.

It carries out the reaction L-histidinol phosphate + 2-oxoglutarate = 3-(imidazol-4-yl)-2-oxopropyl phosphate + L-glutamate. The protein operates within amino-acid biosynthesis; L-histidine biosynthesis; L-histidine from 5-phospho-alpha-D-ribose 1-diphosphate: step 7/9. The sequence is that of Histidinol-phosphate aminotransferase from Bifidobacterium longum (strain NCC 2705).